Here is a 100-residue protein sequence, read N- to C-terminus: NADH-quinone oxidoreductase subunit K (100 aa).

Transmembrane regions (helical) follow at residues 4–24, 29–49, and 60–80; these read LSNYLIVSAVLFSIGTIGVLT, IVVFMCIELMLNAVNLTFVAF, and IFVFFIMTVAAAEAAVGLALF.

It belongs to the complex I subunit 4L family. NDH-1 is composed of 14 different subunits. Subunits NuoA, H, J, K, L, M, N constitute the membrane sector of the complex.

Its subcellular location is the cell inner membrane. It carries out the reaction a quinone + NADH + 5 H(+)(in) = a quinol + NAD(+) + 4 H(+)(out). Functionally, NDH-1 shuttles electrons from NADH, via FMN and iron-sulfur (Fe-S) centers, to quinones in the respiratory chain. The immediate electron acceptor for the enzyme in this species is believed to be ubiquinone. Couples the redox reaction to proton translocation (for every two electrons transferred, four hydrogen ions are translocated across the cytoplasmic membrane), and thus conserves the redox energy in a proton gradient. This is NADH-quinone oxidoreductase subunit K from Trichlorobacter lovleyi (strain ATCC BAA-1151 / DSM 17278 / SZ) (Geobacter lovleyi).